The following is a 217-amino-acid chain: Adenylate kinase (217 aa).

10–15 provides a ligand contact to ATP; the sequence is GAGKGT. The tract at residues 30 to 59 is NMP; it reads STGDMLRAAVKAESELGLQVKEVMASGGLV. Residues threonine 31, arginine 36, 57–59, 85–88, and glutamine 92 each bind AMP; these read GLV and GFPR. The LID stretch occupies residues 122 to 159; that stretch reads GRRVHEGSGRIYHVKYDPPKVEGKDDETGEALIQREDD. ATP contacts are provided by residues arginine 123 and 132-133; that span reads IY. 2 residues coordinate AMP: arginine 156 and arginine 167. Glycine 203 serves as a coordination point for ATP.

The protein belongs to the adenylate kinase family. Monomer.

It is found in the cytoplasm. It carries out the reaction AMP + ATP = 2 ADP. The protein operates within purine metabolism; AMP biosynthesis via salvage pathway; AMP from ADP: step 1/1. In terms of biological role, catalyzes the reversible transfer of the terminal phosphate group between ATP and AMP. Plays an important role in cellular energy homeostasis and in adenine nucleotide metabolism. This chain is Adenylate kinase, found in Marinobacter nauticus (strain ATCC 700491 / DSM 11845 / VT8) (Marinobacter aquaeolei).